The primary structure comprises 715 residues: Coiled-coil domain-containing protein 170 (715 aa).

3 coiled-coil regions span residues 30–286 (VTRE…AGQQ), 360–418 (ESRD…LVSG), and 478–656 (ENKT…FREV). Positions 355-591 (MDSREESRDR…DLNKSRDQLE (237 aa)) are required for binding to microtubules and Golgi apparatus location.

As to quaternary structure, binds Golgi-associated microtubules.

It is found in the golgi apparatus. Functionally, plays a role in Golgi-associated microtubules organization and stabilization. This Homo sapiens (Human) protein is Coiled-coil domain-containing protein 170.